We begin with the raw amino-acid sequence, 405 residues long: Molybdopterin molybdenumtransferase 2 (405 aa).

It belongs to the MoeA family. It depends on Mg(2+) as a cofactor.

It catalyses the reaction adenylyl-molybdopterin + molybdate = Mo-molybdopterin + AMP + H(+). The protein operates within cofactor biosynthesis; molybdopterin biosynthesis. Its function is as follows. Catalyzes the insertion of molybdate into adenylated molybdopterin with the concomitant release of AMP. This is Molybdopterin molybdenumtransferase 2 (moaE2) from Mycobacterium tuberculosis (strain CDC 1551 / Oshkosh).